The following is a 207-amino-acid chain: LexA repressor (207 aa).

The segment at residues arginine 28–lysine 48 is a DNA-binding region (H-T-H motif). Residues serine 124 and lysine 161 each act as for autocatalytic cleavage activity in the active site.

Belongs to the peptidase S24 family. As to quaternary structure, homodimer.

It carries out the reaction Hydrolysis of Ala-|-Gly bond in repressor LexA.. Functionally, represses a number of genes involved in the response to DNA damage (SOS response), including recA and lexA. In the presence of single-stranded DNA, RecA interacts with LexA causing an autocatalytic cleavage which disrupts the DNA-binding part of LexA, leading to derepression of the SOS regulon and eventually DNA repair. This Vibrio vulnificus (strain CMCP6) protein is LexA repressor.